The sequence spans 578 residues: Putative diflavin flavoprotein A 2 (578 aa).

Residues 48–240 are zinc metallo-hydrolase; it reads RHGTTYNSFL…LQVVLVATGH (193 aa). Positions 97, 99, 101, 164, 183, and 240 each coordinate Fe cation. In terms of domain architecture, Flavodoxin-like spans 269–406; it reads VALFYVDGYG…LCREAGTDLG (138 aa). The flavodoxin-reductase-like stretch occupies residues 429–578; it reads IGRLSTGLYI…THHRKLGNHY (150 aa).

This sequence in the N-terminal section; belongs to the zinc metallo-hydrolase group 3 family. The protein in the C-terminal section; belongs to the flavodoxin reductase family. It depends on Fe cation as a cofactor.

In terms of biological role, mediates electron transfer from NADH to oxygen, reducing it to water. This modular protein has 3 redox cofactors, in other organisms the same activity requires 2 or 3 proteins. The protein is Putative diflavin flavoprotein A 2 (dfa2) of Synechocystis sp. (strain ATCC 27184 / PCC 6803 / Kazusa).